The following is a 608-amino-acid chain: Protein FAM151A (608 aa).

A helical membrane pass occupies residues 14-34 (WILAGSVSMTLVLAISMILGL). A disordered region spans residues 588–608 (RHRPSSRTGPSYVEGFPGESR).

This sequence belongs to the menorin family.

Its subcellular location is the membrane. This Rattus norvegicus (Rat) protein is Protein FAM151A (Fam151a).